We begin with the raw amino-acid sequence, 419 residues long: Dimethylallyltryptophan synthase 1 (419 aa).

The L-tryptophan site is built by Phe81, Met82, and Glu90. Phe81 serves as a coordination point for L-tyrosine. The (2E)-geranyl diphosphate site is built by Arg105, Lys187, Tyr189, Arg251, Lys253, and Tyr255. Dimethylallyl diphosphate-binding residues include Arg105, Lys187, Tyr189, Arg251, Lys253, and Tyr255. Arg257 provides a ligand contact to L-tryptophan. Arg257 contributes to the L-tyrosine binding site. (2E)-geranyl diphosphate contacts are provided by Lys332 and Tyr334. Dimethylallyl diphosphate-binding residues include Lys332 and Tyr334. Tyr389 contributes to the L-tryptophan binding site. Tyr389 is an L-tyrosine binding site. (2E)-geranyl diphosphate is bound at residue Tyr404.

Belongs to the tryptophan dimethylallyltransferase family.

It carries out the reaction L-tyrosine + dimethylallyl diphosphate = 4-O-dimethylallyl-L-tyrosine + diphosphate. Dimethylallyltryptophan synthase; part of the DMATS1 gene cluster that mediates the biosynthesis of a reversely N-prenylated monomeric L-tryptophan (r-N-DMAT). DMATS1 catalyzes the reverse N-prenylation of L-Trp with DMAPP to yield N-dimethylallyl-L-tryptophan. DMATS1 exhibits unusually broad substrate specificity and can utilize geranyl diphosphate (GPP) or L-Tyr as an alternative prenyl donor or acceptor, respectively. Is able to catalyze both forward and reverse prenylation, i.e., at C1 or C3 of DMAPP; and it can catalyze C-N and C-O bond-forming reactions. The main product of the cluster is the reverse-N-dimethylallyl-L-tryptophan (r-N-DMAT) produced by the dimethylallyltryptophan synthase DMATS1 and it remains unclear whether this metabolite undergoes further modifications when silent gene clusters are activated. The acetylated form of r-N-DMAT, ac-r-N-DMAT, is also produced. The roles of the cytochrome P450 monooxygenase FFUJ_09176 and the methyltransferase FFUJ_09178 have still to be elucidated. This Gibberella fujikuroi (strain CBS 195.34 / IMI 58289 / NRRL A-6831) (Bakanae and foot rot disease fungus) protein is Dimethylallyltryptophan synthase 1.